A 275-amino-acid polypeptide reads, in one-letter code: Phosphonoacetaldehyde hydrolase (275 aa).

Asp-15 functions as the Nucleophile in the catalytic mechanism. Residues Asp-15 and Ala-17 each contribute to the Mg(2+) site. Catalysis depends on Lys-56, which acts as the Schiff-base intermediate with substrate. Residue Asp-189 coordinates Mg(2+).

Belongs to the HAD-like hydrolase superfamily. PhnX family. In terms of assembly, homodimer. Mg(2+) is required as a cofactor.

The enzyme catalyses phosphonoacetaldehyde + H2O = acetaldehyde + phosphate + H(+). Functionally, involved in phosphonate degradation. The chain is Phosphonoacetaldehyde hydrolase from Pseudomonas entomophila (strain L48).